Reading from the N-terminus, the 397-residue chain is Tryptophan synthase beta chain (397 aa).

K89 carries the post-translational modification N6-(pyridoxal phosphate)lysine.

Belongs to the TrpB family. Tetramer of two alpha and two beta chains. Pyridoxal 5'-phosphate serves as cofactor.

It carries out the reaction (1S,2R)-1-C-(indol-3-yl)glycerol 3-phosphate + L-serine = D-glyceraldehyde 3-phosphate + L-tryptophan + H2O. It participates in amino-acid biosynthesis; L-tryptophan biosynthesis; L-tryptophan from chorismate: step 5/5. Functionally, the beta subunit is responsible for the synthesis of L-tryptophan from indole and L-serine. This chain is Tryptophan synthase beta chain, found in Leptospira interrogans serogroup Icterohaemorrhagiae serovar copenhageni (strain Fiocruz L1-130).